A 423-amino-acid chain; its full sequence is Tumor necrosis factor receptor superfamily member 19 (423 aa).

Positions 1-29 are cleaved as a signal peptide; the sequence is MALKVLLEQEKTFFTLLVLLGYLSCKVTC. At 30–170 the chain is on the extracellular side; it reads ESGDCRQQEF…TASSPRDTAL (141 aa). TNFR-Cys repeat units lie at residues 33–72, 74–114, and 116–149; these read DCRQ…DAQC, TCRL…DAIC, and DCLP…EPHC. Cystine bridges form between Cys34–Cys46, Cys49–Cys62, Cys52–Cys72, Cys75–Cys89, Cys92–Cys106, Cys95–Cys114, Cys117–Cys135, and Cys138–Cys149. Asn105 carries N-linked (GlcNAc...) asparagine glycosylation. Residues 171–191 form a helical membrane-spanning segment; sequence AAVICSALATVLLALLILCVI. The Cytoplasmic portion of the chain corresponds to 192–423; it reads YCKRQFMEKK…LQVRQRLGSL (232 aa).

In terms of assembly, associates with TRAF1, TRAF2, TRAF3 and TRAF5. Interacts with LINGO1. In terms of tissue distribution, highly expressed in prostate. Detected at lower levels in thymus, spleen, testis, uterus, small intestine, colon and peripheral blood leukocytes.

The protein localises to the membrane. Functionally, can mediate activation of JNK and NF-kappa-B. May promote caspase-independent cell death. The chain is Tumor necrosis factor receptor superfamily member 19 (TNFRSF19) from Homo sapiens (Human).